We begin with the raw amino-acid sequence, 65 residues long: Large ribosomal subunit protein bL35 (65 aa).

The interval 1 to 22 (MPKLKTKSGAAKRFKKTGKGGF) is disordered.

This sequence belongs to the bacterial ribosomal protein bL35 family.

This chain is Large ribosomal subunit protein bL35, found in Francisella philomiragia subsp. philomiragia (strain ATCC 25017 / CCUG 19701 / FSC 153 / O#319-036).